Consider the following 157-residue polypeptide: Ribosomal RNA large subunit methyltransferase H (157 aa).

S-adenosyl-L-methionine is bound by residues Leu73, Gly105, and 124–129 (MSKMTF).

Belongs to the RNA methyltransferase RlmH family. Homodimer.

It localises to the cytoplasm. It catalyses the reaction pseudouridine(1915) in 23S rRNA + S-adenosyl-L-methionine = N(3)-methylpseudouridine(1915) in 23S rRNA + S-adenosyl-L-homocysteine + H(+). Specifically methylates the pseudouridine at position 1915 (m3Psi1915) in 23S rRNA. The sequence is that of Ribosomal RNA large subunit methyltransferase H from Bacteroides thetaiotaomicron (strain ATCC 29148 / DSM 2079 / JCM 5827 / CCUG 10774 / NCTC 10582 / VPI-5482 / E50).